The sequence spans 289 residues: 4-diphosphocytidyl-2-C-methyl-D-erythritol kinase (289 aa).

Lysine 11 is a catalytic residue. 93–103 contacts ATP; sequence PLAAGLAGGSA. Residue aspartate 135 is part of the active site.

The protein belongs to the GHMP kinase family. IspE subfamily.

It carries out the reaction 4-CDP-2-C-methyl-D-erythritol + ATP = 4-CDP-2-C-methyl-D-erythritol 2-phosphate + ADP + H(+). Its pathway is isoprenoid biosynthesis; isopentenyl diphosphate biosynthesis via DXP pathway; isopentenyl diphosphate from 1-deoxy-D-xylulose 5-phosphate: step 3/6. Catalyzes the phosphorylation of the position 2 hydroxy group of 4-diphosphocytidyl-2C-methyl-D-erythritol. This is 4-diphosphocytidyl-2-C-methyl-D-erythritol kinase from Thermoanaerobacter pseudethanolicus (strain ATCC 33223 / 39E) (Clostridium thermohydrosulfuricum).